The primary structure comprises 188 residues: Probable DNA-directed RNA polymerase subunit delta (188 aa).

The HTH HARE-type domain occupies 14–83 (LSMIEVARAI…GENKWGLRSW (70 aa)). The segment at 119–188 (EDAIDYSADD…EDEEDEEEEE (70 aa)) is disordered.

The protein belongs to the RpoE family. In terms of assembly, RNAP is composed of a core of 2 alpha, a beta and a beta' subunits. The core is associated with a delta subunit and one of several sigma factors.

Participates in both the initiation and recycling phases of transcription. In the presence of the delta subunit, RNAP displays an increased specificity of transcription, a decreased affinity for nucleic acids, and an increased efficiency of RNA synthesis because of enhanced recycling. This is Probable DNA-directed RNA polymerase subunit delta from Streptococcus equi subsp. equi (strain 4047).